A 979-amino-acid chain; its full sequence is Pimaradiene synthase pbcA (979 aa).

The VYDTAW motif motif lies at 34–39 (VYDTAW). Positions 328 to 331 (DADD) match the DXDD B-type cyclization motif motif. Mg(2+) contacts are provided by Asp665, Glu669, Asn865, Asp866, Ser869, and Asp873. Positions 665-669 (DEFME) match the DEXXE A-type cyclization motif motif.

This sequence belongs to the terpene synthase family. Mg(2+) serves as cofactor.

It carries out the reaction (2E,6E,10E)-geranylgeranyl diphosphate = ent-copalyl diphosphate. The catalysed reaction is ent-copalyl diphosphate = ent-pimara-8(14),15-diene + diphosphate. The protein operates within secondary metabolite biosynthesis; terpenoid biosynthesis. In terms of biological role, bifunctional terpene synthase; part of the gene cluster that mediates the biosynthesis of the diterpene ent-pimara-8(14),15-diene (PD). Within the cluster, the HMG-CoA reductase AN1593 functions in the mevalonate pathway, which produces isoprenoid precursors. The geranylgeranyl pyrophosphate (GGPP) synthase AN1592 is needed in the formation of GGPP, the precursor for diterpenes. Lastly, the pimaradiene synthase pbcA performs the 2 cyclization steps that convert GGPP to ent-pimara-8(14),15-diene with ent-copalyl diphosphate as an intermediate. The putative roles of the remaining cluster enzymes in ent-pimara-8(14),15-diene biosynthesis is unclear. The cytochrome P450 monooxygenase AN1598, the glutathione S-transferase AN1595, the oxidoreductases AN1596 and AN1597 probably function as decorative enzymes. It is possible that in biological conditions the compound is oxidized to ent-pimara-8(14),15-dien-19-oic acid, which is a bioactive diterpene compound predominant in many plant extracts. The sequence is that of Pimaradiene synthase pbcA from Emericella nidulans (strain FGSC A4 / ATCC 38163 / CBS 112.46 / NRRL 194 / M139) (Aspergillus nidulans).